The sequence spans 344 residues: Dihydroorotase (344 aa).

2 residues coordinate Zn(2+): H14 and H16. Substrate is bound by residues 16–18 (HLR) and N42. Zn(2+)-binding residues include K100, H137, and H175. K100 bears the N6-carboxylysine mark. Position 137 (H137) interacts with substrate. Substrate is bound at residue L220. D248 lines the Zn(2+) pocket. Residue D248 is part of the active site. H252 and A264 together coordinate substrate.

The protein belongs to the metallo-dependent hydrolases superfamily. DHOase family. Class II DHOase subfamily. Homodimer. Zn(2+) serves as cofactor.

It carries out the reaction (S)-dihydroorotate + H2O = N-carbamoyl-L-aspartate + H(+). It functions in the pathway pyrimidine metabolism; UMP biosynthesis via de novo pathway; (S)-dihydroorotate from bicarbonate: step 3/3. Catalyzes the reversible cyclization of carbamoyl aspartate to dihydroorotate. The sequence is that of Dihydroorotase from Cupriavidus taiwanensis (strain DSM 17343 / BCRC 17206 / CCUG 44338 / CIP 107171 / LMG 19424 / R1) (Ralstonia taiwanensis (strain LMG 19424)).